Consider the following 599-residue polypeptide: Peptidyl-Asp metalloendopeptidase (599 aa).

Residues 1–20 form the signal peptide; that stretch reads MKKSLLCSTLALAVASAAQA. Histidine 164 contacts Zn(2+). The active site involves glutamate 165. Zn(2+) contacts are provided by histidine 168 and histidine 174. Positions 265 to 285 are disordered; it reads PTKVPGTVNPGSGGDTPTPPD. The CBM-cenC domain maps to 458-583; sequence YDFESGIGGW…KRAELMILSG (126 aa).

The protein belongs to the peptidase M72 family. In terms of assembly, interacts with BamI, the product of its coregulated adjacent gene, which inhibits its protease activity. Zn(2+) serves as cofactor. In terms of processing, made as a membrane-associated pre-pro-protein, which is exported to the periplasm with removal of the signal peptide, leading to a protein with a molecular mass of 65 kDa, that likely contains the metzincin domain plus tandem carbohydrate-binding domains. Undergoes processing during export to the extracellular milieu, probably by autocatalysis, yielding a (mature length) 25 kDa protein that most likely corresponds to the metzincin domain only.

It is found in the secreted. It catalyses the reaction Cleavage of Xaa-|-Asp, Xaa-|-Glu and Xaa-|-cysteic acid bonds.. With respect to regulation, is inhibited by BamI, the product of its coregulated adjacent gene. Functionally, metalloprotease with endopeptidase activity. Specifically cleaves on the N-terminal side of aspartyl, glutamyl and cysteic acid residues. Mep72 appears to be a secreted biofilm-specific regulator that affects the processing of a very specific subset of virulence factors exported by the type III secretion machinery as well as flagellar proteins. Binds directly to ExoS and PcrV and affects the processing of these proteins in the biofilm secretome, but contrary to expectation, Mep72 seems to protect these targets against proteolytic processing/degradation. This Pseudomonas aeruginosa (strain ATCC 15692 / DSM 22644 / CIP 104116 / JCM 14847 / LMG 12228 / 1C / PRS 101 / PAO1) protein is Peptidyl-Asp metalloendopeptidase.